The chain runs to 229 residues: MIFAANFKMNHTRASTKAYLDALNQKLASKRSEDRVFVFPPSTALDHYDGDFTIGAQNAYLEKNGAFTGEIGLDQLDEFAIKTILIGHSERRDILGEDQAFVAEKFSYFKSQGFEIIYCIGEALEVREAGEEAVMVHLLSQFEGIDLSYEKMIVAYEPIWAIGTGHSATTEAIASTHAALKQHFDRPLLYGGSVKPANIKEITAIESVDGVLVGSASLEVESFTQMIFA.

6 to 8 (NFK) contacts substrate. His88 acts as the Electrophile in catalysis. The active-site Proton acceptor is the Glu157. Residues Gly163 and Ser193 each coordinate substrate.

It belongs to the triosephosphate isomerase family. Homodimer.

It is found in the cytoplasm. It catalyses the reaction D-glyceraldehyde 3-phosphate = dihydroxyacetone phosphate. It functions in the pathway carbohydrate biosynthesis; gluconeogenesis. Its pathway is carbohydrate degradation; glycolysis; D-glyceraldehyde 3-phosphate from glycerone phosphate: step 1/1. Involved in the gluconeogenesis. Catalyzes stereospecifically the conversion of dihydroxyacetone phosphate (DHAP) to D-glyceraldehyde-3-phosphate (G3P). This Sulfurovum sp. (strain NBC37-1) protein is Triosephosphate isomerase.